A 645-amino-acid polypeptide reads, in one-letter code: 1,4-alpha-glucan branching enzyme GlgB (645 aa).

Aspartate 309 serves as the catalytic Nucleophile. The active-site Proton donor is the glutamate 352. The interval 619-645 (VKTRKGSKKQDGSKTKVRSNVTSRGKR) is disordered. Positions 636 to 645 (RSNVTSRGKR) are enriched in polar residues.

The protein belongs to the glycosyl hydrolase 13 family. GlgB subfamily. Monomer.

The enzyme catalyses Transfers a segment of a (1-&gt;4)-alpha-D-glucan chain to a primary hydroxy group in a similar glucan chain.. Its pathway is glycan biosynthesis; glycogen biosynthesis. Its function is as follows. Catalyzes the formation of the alpha-1,6-glucosidic linkages in glycogen by scission of a 1,4-alpha-linked oligosaccharide from growing alpha-1,4-glucan chains and the subsequent attachment of the oligosaccharide to the alpha-1,6 position. The protein is 1,4-alpha-glucan branching enzyme GlgB of Bacillus cereus (strain Q1).